The following is a 419-amino-acid chain: Equilibrative nucleotide transporter 5 (419 aa).

The next 11 membrane-spanning stretches (helical) occupy residues 20-40 (MVVC…LLSV), 56-76 (VLTF…AYNE), 86-106 (LIGY…DLAT), 108-128 (GHGG…FGFA), 142-162 (LMCP…GALT), 186-206 (IFLA…AYVF), 265-285 (YVVN…GFLY), 292-312 (GLGS…DLVG), 327-347 (KGLT…YFTA), 354-374 (WMIL…VCIL), and 393-413 (LVLF…LWLI).

The protein belongs to the SLC29A/ENT transporter (TC 2.A.57) family.

It is found in the cell membrane. In terms of biological role, may be involved in nucleoside transport. The polypeptide is Equilibrative nucleotide transporter 5 (ENT5) (Arabidopsis thaliana (Mouse-ear cress)).